The sequence spans 319 residues: 4-hydroxy-3-methylbut-2-enyl diphosphate reductase (319 aa).

Position 17 (Cys17) interacts with [4Fe-4S] cluster. (2E)-4-hydroxy-3-methylbut-2-enyl diphosphate contacts are provided by His46 and His79. Residues His46 and His79 each contribute to the dimethylallyl diphosphate site. Residues His46 and His79 each contribute to the isopentenyl diphosphate site. Cys101 contacts [4Fe-4S] cluster. His129 contacts (2E)-4-hydroxy-3-methylbut-2-enyl diphosphate. His129 is a dimethylallyl diphosphate binding site. His129 is a binding site for isopentenyl diphosphate. The active-site Proton donor is the Glu131. Residue Thr170 participates in (2E)-4-hydroxy-3-methylbut-2-enyl diphosphate binding. Cys200 is a [4Fe-4S] cluster binding site. (2E)-4-hydroxy-3-methylbut-2-enyl diphosphate contacts are provided by Ser228, Ser229, Asn230, and Ser273. Residues Ser228, Ser229, Asn230, and Ser273 each contribute to the dimethylallyl diphosphate site. Ser228, Ser229, Asn230, and Ser273 together coordinate isopentenyl diphosphate.

It belongs to the IspH family. The cofactor is [4Fe-4S] cluster.

It catalyses the reaction isopentenyl diphosphate + 2 oxidized [2Fe-2S]-[ferredoxin] + H2O = (2E)-4-hydroxy-3-methylbut-2-enyl diphosphate + 2 reduced [2Fe-2S]-[ferredoxin] + 2 H(+). The enzyme catalyses dimethylallyl diphosphate + 2 oxidized [2Fe-2S]-[ferredoxin] + H2O = (2E)-4-hydroxy-3-methylbut-2-enyl diphosphate + 2 reduced [2Fe-2S]-[ferredoxin] + 2 H(+). Its pathway is isoprenoid biosynthesis; dimethylallyl diphosphate biosynthesis; dimethylallyl diphosphate from (2E)-4-hydroxy-3-methylbutenyl diphosphate: step 1/1. The protein operates within isoprenoid biosynthesis; isopentenyl diphosphate biosynthesis via DXP pathway; isopentenyl diphosphate from 1-deoxy-D-xylulose 5-phosphate: step 6/6. Functionally, catalyzes the conversion of 1-hydroxy-2-methyl-2-(E)-butenyl 4-diphosphate (HMBPP) into a mixture of isopentenyl diphosphate (IPP) and dimethylallyl diphosphate (DMAPP). Acts in the terminal step of the DOXP/MEP pathway for isoprenoid precursor biosynthesis. This is 4-hydroxy-3-methylbut-2-enyl diphosphate reductase from Cereibacter sphaeroides (strain ATCC 17029 / ATH 2.4.9) (Rhodobacter sphaeroides).